A 351-amino-acid polypeptide reads, in one-letter code: 5-deoxyribose 1-phosphate isomerase (351 aa).

Residues 48 to 50 (RGA), Arg-91, and Gln-198 contribute to the substrate site. Asp-239 serves as the catalytic Proton donor. Residue 249 to 250 (NK) participates in substrate binding.

It belongs to the EIF-2B alpha/beta/delta subunits family. DrdI subfamily.

It carries out the reaction 5-deoxy-alpha-D-ribose 1-phosphate = 5-deoxy-D-ribulose 1-phosphate. It functions in the pathway carbohydrate degradation. Its function is as follows. Catalyzes the isomerization of 5-deoxy-alpha-D-ribose 1-phosphate to 5-deoxy-D-ribulose 1-phosphate, as part of a 5-deoxyribose salvage pathway that recycles this toxic radical SAM enzyme by-product to mainstream metabolites. The chain is 5-deoxyribose 1-phosphate isomerase from Moorella thermoacetica (strain ATCC 39073 / JCM 9320).